The primary structure comprises 202 residues: Superoxide dismutase [Mn] (202 aa).

Residues His-27, His-82, Asp-164, and His-168 each contribute to the Mn(2+) site.

This sequence belongs to the iron/manganese superoxide dismutase family. Homodimer. Mn(2+) serves as cofactor.

It carries out the reaction 2 superoxide + 2 H(+) = H2O2 + O2. Functionally, destroys superoxide anion radicals which are normally produced within the cells and which are toxic to biological systems. This Listeria innocua serovar 6a (strain ATCC BAA-680 / CLIP 11262) protein is Superoxide dismutase [Mn] (sodA).